Reading from the N-terminus, the 542-residue chain is CTP synthase (542 aa).

The amidoligase domain stretch occupies residues 1 to 269 (MQTKYIFITG…DALICELLHL (269 aa)). Ser14 lines the CTP pocket. Ser14 is a UTP binding site. ATP-binding positions include 15 to 20 (SLGKGL) and Asp72. Mg(2+) is bound by residues Asp72 and Glu143. CTP contacts are provided by residues 150–152 (DIE), 189–194 (KTKPSQ), and Lys225. Residues 189 to 194 (KTKPSQ) and Lys225 contribute to the UTP site. 241 to 243 (KDV) contributes to the ATP binding site. Residues 301 to 538 (YVQHQDAYKS…IQAMIIYHKS (238 aa)) form the Glutamine amidotransferase type-1 domain. Gly358 contributes to the L-glutamine binding site. Cys385 acts as the Nucleophile; for glutamine hydrolysis in catalysis. Residues 386–389 (LGMQ), Glu409, and Arg466 contribute to the L-glutamine site. Catalysis depends on residues His511 and Glu513.

It belongs to the CTP synthase family. In terms of assembly, homotetramer.

It carries out the reaction UTP + L-glutamine + ATP + H2O = CTP + L-glutamate + ADP + phosphate + 2 H(+). The catalysed reaction is L-glutamine + H2O = L-glutamate + NH4(+). The enzyme catalyses UTP + NH4(+) + ATP = CTP + ADP + phosphate + 2 H(+). It functions in the pathway pyrimidine metabolism; CTP biosynthesis via de novo pathway; CTP from UDP: step 2/2. Allosterically activated by GTP, when glutamine is the substrate; GTP has no effect on the reaction when ammonia is the substrate. The allosteric effector GTP functions by stabilizing the protein conformation that binds the tetrahedral intermediate(s) formed during glutamine hydrolysis. Inhibited by the product CTP, via allosteric rather than competitive inhibition. Catalyzes the ATP-dependent amination of UTP to CTP with either L-glutamine or ammonia as the source of nitrogen. Regulates intracellular CTP levels through interactions with the four ribonucleotide triphosphates. This Protochlamydia amoebophila (strain UWE25) protein is CTP synthase.